We begin with the raw amino-acid sequence, 215 residues long: Large ribosomal subunit protein uL3 (215 aa).

The disordered stretch occupies residues 136-155 (GVSISHRSHGSTGQRQDPGK). Position 151 is an N5-methylglutamine (Q151).

This sequence belongs to the universal ribosomal protein uL3 family. In terms of assembly, part of the 50S ribosomal subunit. Forms a cluster with proteins L14 and L19. Post-translationally, methylated by PrmB.

Functionally, one of the primary rRNA binding proteins, it binds directly near the 3'-end of the 23S rRNA, where it nucleates assembly of the 50S subunit. The polypeptide is Large ribosomal subunit protein uL3 (Rickettsia conorii (strain ATCC VR-613 / Malish 7)).